The sequence spans 822 residues: A disintegrin and metallopeptidase domain 3 (822 aa).

The signal sequence occupies residues 1-16 (MLPLFLVLSYLGQVIA). A Peptidase M12B domain is found at 187–384 (RILRIKIIMD…PELDCLRNTS (198 aa)). 7 disulfide bridges follow: cysteine 296/cysteine 379, cysteine 338/cysteine 363, cysteine 340/cysteine 345, cysteine 456/cysteine 476, cysteine 623/cysteine 635, cysteine 629/cysteine 641, and cysteine 643/cysteine 652. A Disintegrin domain is found at 395-484 (GSYCGNHLLE…GCAPDTKAAD (90 aa)). Residues 619 to 653 (GTRECEADDKCQGHGICNNLNNCQCESGFAPPECD) form the EGF-like domain. The helical transmembrane segment at 689-709 (VLLISFYILLPFLVVLAFMAV) threads the bilayer.

Interacts with LY6K. Interacts with TEX101. In terms of processing, initially synthesized as a 110-kDa precursor in round spermatids, and the precursor is then processed into a 42-kDa mature protein during the sperm transport into and/or once in the epididymis. As to expression, expressed in sperm (at protein level).

The protein resides in the cell membrane. Functionally, involved in fertilization by controlling sperm migration into the oviduct. Promotes the binding of sperm to the oocyte zona pellucida. In Mus musculus (Mouse), this protein is A disintegrin and metallopeptidase domain 3.